Reading from the N-terminus, the 185-residue chain is Glycerol-3-phosphate acyltransferase 4 (185 aa).

Helical transmembrane passes span 1 to 21, 47 to 67, 69 to 89, 113 to 133, 137 to 157, and 158 to 178; these read MPLL…AYLA, LGRG…SLAI, LALA…AAVL, LLIA…VLLF, VIAA…LYGL, and PGGV…THFI.

This sequence belongs to the PlsY family. In terms of assembly, probably interacts with PlsX.

It is found in the cell membrane. The catalysed reaction is an acyl phosphate + sn-glycerol 3-phosphate = a 1-acyl-sn-glycero-3-phosphate + phosphate. Its pathway is lipid metabolism; phospholipid metabolism. In terms of biological role, catalyzes the transfer of an acyl group from acyl-phosphate (acyl-PO(4)) to glycerol-3-phosphate (G3P) to form lysophosphatidic acid (LPA). This enzyme utilizes acyl-phosphate as fatty acyl donor, but not acyl-CoA or acyl-ACP. In Dehalococcoides mccartyi (strain ATCC BAA-2266 / KCTC 15142 / 195) (Dehalococcoides ethenogenes (strain 195)), this protein is Glycerol-3-phosphate acyltransferase 4.